Reading from the N-terminus, the 107-residue chain is uncharacterized protein (107 aa).

This is an uncharacterized protein from Dictyostelium discoideum (Social amoeba).